Here is a 680-residue protein sequence, read N- to C-terminus: MLTHKTCQARKKMQVSFVIRDAEEKQHRNGVNALQLDANNGKLYSAGRDAIIRVWNTRTDSSEKYIQSMEHHNDWVNDIVLCCNGRNLISASCDTTVKVWNAQKGFCMSTLRTHRDYVQALAYAKDREQVASAGLDKAIFLWDVNTLTALTASNNTVTTSSLTGSKDSIYSLAMNPSGTVIVSGSTENILRIWDPRTCMRSMKLRGHTENVRCLVVSPDGNQVVSGSSDGTIKVWNLGQQRCVQTIHVHKEGVWSLLMSENFQYIISGSRDRNIIVTEMRNPSNKTLVCEEQAPVLSLGYNIDKTGVWATTWNSDIRCWKLPMYDRCTMNSSGGMDAQWTQGGTEVACIKGGAAIKECAVLNDKRYIITKDSQDQVVVYDVLRVVKKEQLGAVDYEAEVKKRNKQVYIPNWFTVDLKTGMPTIVLGQEEVDCFSAWVSIEAGLPECVDPTTEIKINYGKLLLEALLEYWTPPHSIPPNEMEPDMHGNGYFQVPKHTPVIFSEVGGRTVCRLLVRDAAGDSESTLLHETAPQWVTDVVIEKNIPKFLKIPFFLQPHPQMTKPERTKKDRLVANEFIQCRKVCEHVLEKVLNAETTPSGGNANNSLQNSQSDANSEGSQLPAEERIELWCNDVVVDPNMDLRTVRHFIWKQSTDLTFQYKTKQNFNYDGSIGDSLERVTRKY.

WD repeat units follow at residues glutamine 26–tyrosine 65, histidine 71–threonine 110, threonine 113–alanine 152, glycine 164–lysine 203, glycine 206–threonine 245, valine 248–leucine 287, glutamate 290–methionine 329, and lysine 350–glutamine 389. Residues glutamate 592 to serine 616 form a disordered region.

Belongs to the WD repeat WDR48 family. Catalytic component of the Usp12-46 deubiquitylase complex consisting of Usp12-46, Wdr20 and Uaf1; regulatory subunit that, together wtih Wdr20, stabilizes Usp12-46. The Usp12-46 deubiquitylase complex associates with arr/arrow; the interaction leads to deubiquitination and stabilization of arr/arrow.

Regulatory component of the Usp12-46 deubiquitylase complex. activates deubiquitination by increasing the catalytic turnover without increasing the affinity of deubiquitinating enzymes for the substrate. The complex deubiquitylates the wg/wingless-signaling receptor arr/arrow, which stabilizes the receptor and increases its concentration at the cell surface; this enhances the sensitivity of cells to wg/wingless-signal stimulation. This increases the amplitude and spatial range of the signaling response to the wg/wingless morphogen gradient, facilitating the precise concentration-dependent regulation of its target genes. Together with Wdr20 and Usp12-46 required for wg/wingless-mediated signaling in the wing imaginal disc and for wg/wingless-dependent regulation of intestinal stem cell proliferation. The chain is WD repeat-containing protein 48 homolog from Drosophila erecta (Fruit fly).